Here is a 294-residue protein sequence, read N- to C-terminus: tRNA dimethylallyltransferase (294 aa).

Position 7–14 (7–14 (GPTGSGKS)) interacts with ATP. 9 to 14 (TGSGKS) contacts substrate.

The protein belongs to the IPP transferase family. In terms of assembly, monomer. Mg(2+) is required as a cofactor.

It carries out the reaction adenosine(37) in tRNA + dimethylallyl diphosphate = N(6)-dimethylallyladenosine(37) in tRNA + diphosphate. Functionally, catalyzes the transfer of a dimethylallyl group onto the adenine at position 37 in tRNAs that read codons beginning with uridine, leading to the formation of N6-(dimethylallyl)adenosine (i(6)A). The chain is tRNA dimethylallyltransferase from Akkermansia muciniphila (strain ATCC BAA-835 / DSM 22959 / JCM 33894 / BCRC 81048 / CCUG 64013 / CIP 107961 / Muc).